Here is a 553-residue protein sequence, read N- to C-terminus: MEKRALIALVLSLLVLVFWEMYFGLFRMPAPPPNKTEQAAPTTTQPATPQTVPPQAATPQALPQDHVFRPDQQFQSWAIEDPLYRMNIIAPGARLSSFELKKHRKAVQPDSPPMQMVTSQTGGYLPMAIDLLHHQDWQLSTRPFFSEAGPKTVLEDKKPRVLSFSTEVPGKVRVTKSFTCSPESYLLDLEVQIGNLSSERLVDQMGISFYFLPFSPPEEESSYNPSQLTTLEKGSLKNFTTKDLSKSDLVLKPPMTWVAYENNFFINAIIPVAEGGYQFVPRILDATKGLLQLVYLTDPFQLEGNETKSFKLRFYIGPKELSTLARAEHQLASAVDYGWFTFIAKPLVYVLDWFYRYTHNWGVAIILLTIVIKILFWPLTQKSYQSMQKMKKIQPKMTQIREKYKGDREKMNQELMGLYRTYKVNPMGGCLPMLLQIPVFFALYRMLNGAVELRHEPFMLWIDDLTAPDRLPIGFDIPYLGGLPVLTLLMGITMFIQQKMTPSAGDPRQDQIMMIMPVMFTVFFVNFPSGLVLYWLVNNVLSIAQQYWVNRHA.

Residues 6–26 (LIALVLSLLVLVFWEMYFGLF) form a helical membrane-spanning segment. Residues 34–59 (NKTEQAAPTTTQPATPQTVPPQAATP) are disordered. Over residues 38–59 (QAAPTTTQPATPQTVPPQAATP) the composition is skewed to low complexity. 5 helical membrane-spanning segments follow: residues 331-351 (LASAVDYGWFTFIAKPLVYVL), 360-380 (NWGVAIILLTIVIKILFWPLT), 424-444 (VNPMGGCLPMLLQIPVFFALY), 477-497 (IPYLGGLPVLTLLMGITMFIQ), and 512-532 (IMMIMPVMFTVFFVNFPSGLV).

Belongs to the OXA1/ALB3/YidC family. Type 1 subfamily. Interacts with the Sec translocase complex via SecD. Specifically interacts with transmembrane segments of nascent integral membrane proteins during membrane integration.

Its subcellular location is the cell inner membrane. Its function is as follows. Required for the insertion and/or proper folding and/or complex formation of integral membrane proteins into the membrane. Involved in integration of membrane proteins that insert both dependently and independently of the Sec translocase complex, as well as at least some lipoproteins. Aids folding of multispanning membrane proteins. The polypeptide is Membrane protein insertase YidC (Syntrophobacter fumaroxidans (strain DSM 10017 / MPOB)).